The sequence spans 801 residues: Lon protease 2 (801 aa).

The 196-residue stretch at 14–209 folds into the Lon N-terminal domain; that stretch reads LPMLPVRDIV…LVNEILAAEL (196 aa). 361 to 368 serves as a coordination point for ATP; it reads GPPGVGKT. The Lon proteolytic domain maps to 597 to 778; that stretch reads DSQVGVVQGL…DEVFAVAFDK (182 aa). Catalysis depends on residues serine 684 and lysine 727. Over residues 780-791 the composition is skewed to basic and acidic residues; sequence AKGQEKKPAAKK. Positions 780 to 801 are disordered; sequence AKGQEKKPAAKKDPKKTKSLAA. Residues 792-801 are compositionally biased toward basic residues; it reads DPKKTKSLAA.

It belongs to the peptidase S16 family. In terms of assembly, homohexamer. Organized in a ring with a central cavity.

Its subcellular location is the cytoplasm. It catalyses the reaction Hydrolysis of proteins in presence of ATP.. In terms of biological role, ATP-dependent serine protease that mediates the selective degradation of mutant and abnormal proteins as well as certain short-lived regulatory proteins. Required for cellular homeostasis and for survival from DNA damage and developmental changes induced by stress. Degrades polypeptides processively to yield small peptide fragments that are 5 to 10 amino acids long. Binds to DNA in a double-stranded, site-specific manner. This is Lon protease 2 from Bdellovibrio bacteriovorus (strain ATCC 15356 / DSM 50701 / NCIMB 9529 / HD100).